Reading from the N-terminus, the 911-residue chain is Golgin IMH1 (911 aa).

Disordered regions lie at residues 16 to 41 and 271 to 314; these read LAKG…SGLP and KELP…ETVD. Positions 101 to 280 form a coiled coil; that stretch reads FFQDLNNKNN…KELPKAISHQ (180 aa). Basic residues predominate over residues 286 to 299; it reads NRRKKNRNKGKKNK. Phosphoserine occurs at positions 308 and 660. Coiled coils occupy residues 312-735 and 766-814; these read TVDN…ALKH and SKAD…KERQ. The disordered stretch occupies residues 814–850; it reads QYSDKSGRVSRSGSIGTLANANIDSSPANNSNPTKLE. The segment covering 822–847 has biased composition (polar residues); that stretch reads VSRSGSIGTLANANIDSSPANNSNPT. Residue S827 is modified to Phosphoserine. Position 830 is a phosphothreonine (T830). The GRIP domain maps to 861-909; it reads DSEKNEKIAYIKNVLLGFLEHKEQRNQLLPVISMLLQLDSTDEKRLVMS.

In terms of assembly, forms oligomers and is present in high-molecular-mass complexes. Interacts with ARL1.

Its subcellular location is the cytoplasm. It is found in the golgi apparatus membrane. Involved in vesicular transport between an endosomal compartment and the Golgi apparatus. The protein is Golgin IMH1 (IMH1) of Saccharomyces cerevisiae (strain ATCC 204508 / S288c) (Baker's yeast).